A 260-amino-acid polypeptide reads, in one-letter code: Repetitive secreted protein 1 (260 aa).

The N-terminal stretch at 1–20 (MKLSFTIVATAALVASCTFA) is a signal peptide.

Post-translationally, rsp1 is processed by the subtilisin-like endoprotease kex2. Cleavage by kex2 generates 11 peptides.

The protein localises to the secreted. Repetitive secreted protein essential for pathogenic development. Hum3 and rsp1 together are pathogenicity proteins that share an essential function in early stages of the infection. The polypeptide is Repetitive secreted protein 1 (Mycosarcoma maydis (Corn smut fungus)).